A 449-amino-acid chain; its full sequence is Telomere resolvase ResT (449 aa).

It depends on No cofactors were found to be necessary. as a cofactor.

The protein localises to the cytoplasm. It is found in the nucleoid. Functionally, catalyzes the conservative, sequence-specific DNA breakage and reunion reaction that generates two hairpin telomeres from a replicated telomere substrate. Breaks two phosphodiester bonds in a single DNA duplex and joins each end with the opposite DNA strand to form covalently closed hairpin telomeres. In vitro relaxed-circular, open-circular and linearized plasmids, but not supercoiled DNA, are all substrates. Cleavage is position-dependent relative to conserved sequence elements. This chain is Telomere resolvase ResT, found in Borreliella burgdorferi (strain ATCC 35210 / DSM 4680 / CIP 102532 / B31) (Borrelia burgdorferi).